The following is a 357-amino-acid chain: MMLPLLAVSAFASLGAAQTYTSCNPTNSLKTWSLSTDFTQGSSDGWTAISGNVTYGSNGAEFTINKRYDAPTLETNFYIFFGEVEVVMRAANGTGIVSSIVMESDDLDEIDWECTGTDTTQIQTNYFGKGNTTTYDRAIWETVSSPQDEFHTYKVVWTAAAITWYIDGTAVRTLEYADAVDGKNYPQTPMVVKLGIWAGGDPSNSEGTIEWAGGETDYDEVPFTMYVKSVNIINYNPAASYNYTDKTGSYTSIVASNSTTGSGIHSSNSVSVFAPSSSTSTFTSSRALIATASTYPASVQTSSSGVVSLSSSSASSSSAAASSTSGSASAVFTGAAVTNLPSFFFTVFFALAIALAF.

The signal sequence occupies residues Met1–Ala17. Residues Tyr20–Glu220 form the GH16 domain. N-linked (GlcNAc...) asparagine glycosylation is found at Asn52 and Asn92. Glu109 serves as the catalytic Nucleophile. Glu113 (proton donor) is an active-site residue. Glu113 contacts chitin. Asn131 carries N-linked (GlcNAc...) asparagine glycosylation. Chitin is bound by residues Lys193, Trp197, and Thr208. N-linked (GlcNAc...) asparagine glycosylation is found at Asn242 and Asn257. The GPI-anchor amidated glycine moiety is linked to residue Gly326. Residues Ser327–Phe357 constitute a propeptide, removed in mature form. A helical membrane pass occupies residues Val337–Phe357.

This sequence belongs to the glycosyl hydrolase 16 family. CRH1 subfamily. The GPI-like anchor contains a phosphoceramide lipid group. The anchor position has not been determined.

The protein resides in the cell membrane. Its subcellular location is the secreted. It localises to the cell wall. The enzyme catalyses Random endo-hydrolysis of N-acetyl-beta-D-glucosaminide (1-&gt;4)-beta-linkages in chitin and chitodextrins.. Dual chitinase/transglycosylase that plays a role in cell wall architecture. Chitinase and transglycosylase activities are coupled. Required for the polysaccharide cross-linking at the septa and the cell wall. More specifically, transfers chitin to 1,6-beta-glucan in the cell wall. This Aspergillus fumigatus (strain ATCC MYA-4609 / CBS 101355 / FGSC A1100 / Af293) (Neosartorya fumigata) protein is Crh-like protein 1.